The following is a 172-amino-acid chain: Transcriptional activator protein (172 aa).

The Nuclear localization signal signature appears at Lys-56–Arg-71. A zinc finger spans residues Cys-76–His-93. A disordered region spans residues Asp-119–Lys-172. Residues Asn-137–Ser-152 are compositionally biased toward polar residues. The segment at Ser-158–Lys-172 is transactivation.

Belongs to the geminiviridae transcriptional activator protein family. As to quaternary structure, monomer. Homodimer. Homooligomer. Self-interaction correlates with nuclear localization and efficient activation of transcription. Monomers suppress local silencing by interacting with and inactivating host adenosine kinase 2 (ADK2) in the cytoplasm. Interacts with and inhibits host SNF1 kinase. Binds to ssDNA. Phosphorylated.

Its subcellular location is the host nucleus. The protein localises to the host cytoplasm. Strong activator of the late viral genes promoters. Enhances the expression of the capsid protein and nuclear shuttle protein. Acts as a suppressor of RNA-mediated gene silencing, also known as post-transcriptional gene silencing (PTGS), a mechanism of plant viral defense that limits the accumulation of viral RNAs. Suppresses the host RNA silencing by inhibiting adenosine kinase 2 (ADK2), a kinase involved in a general methylation pathway. Also suppresses the host basal defense by interacting with and inhibiting SNF1 kinase, a key regulator of cell metabolism implicated in innate antiviral defense. Determines pathogenicity. The protein is Transcriptional activator protein of Bean golden yellow mosaic virus (isolate Puerto Rico) (BGYMV).